Reading from the N-terminus, the 420-residue chain is Mannose-1-phosphate guanylyltransferase regulatory subunit alpha (420 aa).

Residues 2 to 251 (LKAVILIGGP…DGIWSQIKSA (250 aa)) are substrate-binding domain. Residues E85 and Q247 each coordinate GDP-alpha-D-mannose. The hexapeptide repeat domain stretch occupies residues 273–420 (LARHTAGGPR…SRSFTNQIIL (148 aa)). Residues 356–384 (TPNDPNPNDPRARMDSESLFKDGKLLPAI) are C-loop.

Belongs to the transferase hexapeptide repeat family. In terms of assembly, component of the GMPPA-GMPPB mannose-1-phosphate guanylyltransferase complex composed of 4 GMPPA subunits and 8 GMPPB subunits; the complex is organized into three layers, a central layer made up of 2 GMPPA dimers sandwiched between two layers each made up of 2 GMPPB dimers.

The protein localises to the cytoplasm. Its function is as follows. Regulatory subunit of the GMPPA-GMPPB mannose-1-phosphate guanylyltransferase complex; reduces the catalytic activity of GMPPB when part of the complex. Mediates allosteric feedback inhibition of GMPPB catalytic activity upon binding GDP-alpha-D-mannose. Together with GMPPB regulates GDP-alpha-D-mannose levels. This chain is Mannose-1-phosphate guanylyltransferase regulatory subunit alpha (Gmppa), found in Rattus norvegicus (Rat).